The following is a 1968-amino-acid chain: Signal element on autosome protein 2 (1968 aa).

Residues 72 to 88 (TSSSFSSSLATTTTTSS) show a composition bias toward low complexity. Disordered regions lie at residues 72–252 (TSSS…TPTQ) and 271–364 (QVQQ…VQEQ). Over residues 107 to 119 (SHHHPSSSHHHHP) the composition is skewed to basic residues. Composition is skewed to low complexity over residues 120 to 134 (GQQQSSSSSSSSHLQ), 144 to 165 (HPYYHQQQPQHQHQQAQQYGQA), 219 to 232 (DQPSSSTGSSLPPL), and 298 to 338 (LSSI…SSSS). Residues 346 to 362 (PNASSSSLIKRQSQDVQ) show a composition bias toward polar residues. A C2H2-type 1 zinc finger spans residues 413 to 440 (YQCPNCNRNLANARNLQRHRQTCGSAQH). Disordered regions lie at residues 451–499 (RSPP…LYSP) and 538–601 (WSRD…TLDP). A compositionally biased stretch (pro residues) spans 452–467 (SPPPCASAPPVAPPTA). Positions 472-482 (FQHHNSTGNLT) are enriched in polar residues. A compositionally biased stretch (low complexity) spans 483–498 (LSYSSSSSRHQSSLYS). Basic and acidic residues predominate over residues 570–594 (PLHHLDSFDSADHRKETPRECHEPD). The segment at 651 to 672 (FTCEACKKSVSSERSLRRHYNT) adopts a C2H2-type 2; degenerate zinc-finger fold. Disordered regions lie at residues 681–712 (AASGEERPPTTKRKPATKRPSKKKEASEGPEK) and 785–854 (VTSA…TGNP). Residues 690–702 (TTKRKPATKRPSK) show a composition bias toward basic residues. Positions 794–804 (HQLPHQQPQQQ) are enriched in low complexity. Over residues 812–824 (LLNEQDESADDDG) the composition is skewed to acidic residues. The span at 827-851 (RSSSGTVSNSTTTTTTATTTSSKST) shows a compositional bias: low complexity. The C2H2-type 3; degenerate zinc finger occupies 856-875 (FTCEHCARQLCSMSNLKRHR). Disordered stretches follow at residues 882-905 (ASSSSNSAASRPPSQPSTPATAPA), 975-1069 (GDAL…EHKN), 1083-1227 (RMDA…SPLD), and 1246-1273 (PGPLEQGQSSVDSQSTAEPSPRKASQQA). Low complexity-rich tracts occupy residues 981-1015 (QQHQQKMDQQIQIQFQQQQQQRFQHHQQQQQAGRI), 1023-1046 (ILNQVQNPPQQVQHNQHQNQMLNP), and 1108-1131 (PQRSQAPAPSRQQQQQPPVAYQVQ). Over residues 1136 to 1146 (PLPPMQLPPLQ) the composition is skewed to pro residues. Positions 1147-1185 (NPHNQQQQHQMLHQSQMNYQQVQQVQQVQHVQQQQNLQN) are enriched in low complexity. 2 stretches are compositionally biased toward polar residues: residues 1201–1211 (APGNRSRSHSN) and 1251–1273 (QGQSSVDSQSTAEPSPRKASQQA). The C2H2-type 4 zinc finger occupies 1274–1297 (YICPECKKTYASRKNVKRHRMAVH). 4 disordered regions span residues 1333–1478 (TPDS…ADEE), 1569–1608 (SVGLPSLASPGEQFGYQQYSQHPQQHPQQHPQQHPQQQQQ), 1624–1671 (HPPM…LTCS), and 1769–1822 (ADRQ…PSTN). Residues 1388 to 1403 (ERQEPPKKPVADDHKS) are compositionally biased toward basic and acidic residues. 2 stretches are compositionally biased toward pro residues: residues 1407-1421 (PLPPANTIMPPPPPY) and 1429-1445 (LNPPRTALPPLQLPPLQ). Over residues 1589-1608 (QHPQQHPQQHPQQHPQQQQQ) the composition is skewed to low complexity. Positions 1624–1633 (HPPMPVSQQF) are enriched in polar residues. A C2H2-type 5; degenerate zinc finger spans residues 1668–1694 (LTCSGCKKILGSDYSLRRHRAGCADVQ). A compositionally biased stretch (low complexity) spans 1800 to 1811 (SSSSSSSTSSAS). The segment at 1826–1858 (HYCQFPECGKNFSSEWNLARHTRESCKMTTRAH) adopts a C2H2-type 6 zinc-finger fold.

In terms of tissue distribution, expressed in seam cells, intestine cells, pharyngeal muscles and nerve ring neurons.

It is found in the nucleus. The protein resides in the cytoplasm. Its function is as follows. RNA-binding protein, which regulates the expression of proteins required to control developmental timing of events during the L2 to L3 larval stage switch. Binds to the 3'UTR of the transcript of the heterochronic protein lin-28 to post-transcriptionally negatively regulate its expression in certain tissue types in the later larval stages. During larval development, controls the timing of seam cell division and terminal differentiation into adult alae. In vitro, it can also bind to DNA through its first zinc finger. May bind directly or indirectly to the promoter of the sex-determining factor xol-1 to activate its transcription. Its activation of xol-1 transcription controls sex determination and X chromosome dosage compensation to promote male development. Through the negative regulation of lin-28 transcript, it also has a role in the fox-1-sex-1-mediated determination of sexual fate. Acts in the intestine to play a role in regulating adult lifespan. The protein is Signal element on autosome protein 2 of Caenorhabditis elegans.